A 200-amino-acid polypeptide reads, in one-letter code: Nucleoside triphosphate pyrophosphatase (200 aa).

Residue D75 is the Proton acceptor of the active site.

Belongs to the Maf family. The cofactor is a divalent metal cation.

It localises to the cytoplasm. It catalyses the reaction a ribonucleoside 5'-triphosphate + H2O = a ribonucleoside 5'-phosphate + diphosphate + H(+). The enzyme catalyses a 2'-deoxyribonucleoside 5'-triphosphate + H2O = a 2'-deoxyribonucleoside 5'-phosphate + diphosphate + H(+). In terms of biological role, nucleoside triphosphate pyrophosphatase. May have a dual role in cell division arrest and in preventing the incorporation of modified nucleotides into cellular nucleic acids. This chain is Nucleoside triphosphate pyrophosphatase, found in Synechococcus sp. (strain CC9311).